A 459-amino-acid chain; its full sequence is MENIIKSNPYSNALISTAENPQVAQSGALAGIALAVKDNICTNEMHTTCASGILETFTSPFDATVVDLLKQEGVSIVGKANLDEFGMGSDNANSWFGPVFNPLYPDEPHTPGGSSGGSAAAVAADMCHFALGTDTGGSVRYPAAQCSVIGLKPSYGLISRHGVIAYAQSLDTVGILTKDIDLLEKVFNILNKYDPLDPTSLTPHKRAKLKPPKPHRKLTFGLVKEYNIKGISENVKMAWSQIMDELIKMGHEVVTCSIPAIKNALPAYYAIAPAEASSNFARFDGIRYGSRAPEDRGEHGTLYAPTRQEYFGNEVKRRMWLGTWNLSTDAFNHDYIRSQKIRRILQEDFDEVFNRPNVLSGNEGQKANDEPGVDFIIAPTSNCAPYPLSKLNDSAPVDTYLNDVLTVPASLTGIPSLNIPWKTKQGNVGMQIMGQYGDDLGVMKVGRLLLDKCKELHQD.

Residues Lys-37 and Ser-114 each act as charge relay system in the active site. The Acyl-ester intermediate role is filled by Ser-138.

Belongs to the amidase family. GatA subfamily. Subunit of the heterotrimeric GatFAB amidotransferase (AdT) complex, composed of A, B and F subunits.

It localises to the mitochondrion. It carries out the reaction L-glutamyl-tRNA(Gln) + L-glutamine + ATP + H2O = L-glutaminyl-tRNA(Gln) + L-glutamate + ADP + phosphate + H(+). In terms of biological role, allows the formation of correctly charged Gln-tRNA(Gln) through the transamidation of misacylated Glu-tRNA(Gln) in the mitochondria. The reaction takes place in the presence of glutamine and ATP through an activated gamma-phospho-Glu-tRNA(Gln). This chain is Glutamyl-tRNA(Gln) amidotransferase subunit A, mitochondrial, found in Yarrowia lipolytica (strain CLIB 122 / E 150) (Yeast).